The primary structure comprises 315 residues: Methionyl-tRNA formyltransferase (315 aa).

Ser109–Pro112 contributes to the (6S)-5,6,7,8-tetrahydrofolate binding site.

The protein belongs to the Fmt family.

The catalysed reaction is L-methionyl-tRNA(fMet) + (6R)-10-formyltetrahydrofolate = N-formyl-L-methionyl-tRNA(fMet) + (6S)-5,6,7,8-tetrahydrofolate + H(+). Its function is as follows. Attaches a formyl group to the free amino group of methionyl-tRNA(fMet). The formyl group appears to play a dual role in the initiator identity of N-formylmethionyl-tRNA by promoting its recognition by IF2 and preventing the misappropriation of this tRNA by the elongation apparatus. The polypeptide is Methionyl-tRNA formyltransferase (Lachnospira eligens (strain ATCC 27750 / DSM 3376 / VPI C15-48 / C15-B4) (Eubacterium eligens)).